We begin with the raw amino-acid sequence, 731 residues long: 1,4-alpha-glucan branching enzyme GlgB (731 aa).

The active-site Nucleophile is the Asp-408. The active-site Proton donor is the Glu-461.

The protein belongs to the glycosyl hydrolase 13 family. GlgB subfamily. As to quaternary structure, monomer.

The catalysed reaction is Transfers a segment of a (1-&gt;4)-alpha-D-glucan chain to a primary hydroxy group in a similar glucan chain.. It participates in glycan biosynthesis; glycogen biosynthesis. Its function is as follows. Catalyzes the formation of the alpha-1,6-glucosidic linkages in glycogen by scission of a 1,4-alpha-linked oligosaccharide from growing alpha-1,4-glucan chains and the subsequent attachment of the oligosaccharide to the alpha-1,6 position. The protein is 1,4-alpha-glucan branching enzyme GlgB of Corynebacterium efficiens (strain DSM 44549 / YS-314 / AJ 12310 / JCM 11189 / NBRC 100395).